The sequence spans 295 residues: Cuticle collagen 3A3 (295 aa).

A disordered region spans residues 81 to 278 (AITSSEENGG…GRPGEPGICP (198 aa)). Pro residues-rich tracts occupy residues 97-109 (PGPP…PGRP) and 146-160 (AGPP…PPGD). Triple-helical region regions lie at residues 98 to 127 (GPPG…PGLP), 147 to 203 (GPPG…VGED), and 212 to 277 (GDQG…PGIC). Low complexity predominate over residues 172–182 (QDGIPGQQGTK). Over residues 217 to 228 (PGEPGPEGPPGE) the composition is skewed to pro residues. Residues 229–244 (PGLQGPVGMPGQVGQK) are compositionally biased toward low complexity. Positions 261 to 271 (RPGPPGPPGRP) are enriched in pro residues.

The protein belongs to the cuticular collagen family.

Functionally, nematode cuticles are composed largely of collagen-like proteins. The cuticle functions both as an exoskeleton and as a barrier to protect the worm from its environment. The protein is Cuticle collagen 3A3 (3A3) of Haemonchus contortus (Barber pole worm).